The sequence spans 145 residues: 3-hydroxyacyl-[acyl-carrier-protein] dehydratase FabZ (145 aa).

The active site involves H48.

The protein belongs to the thioester dehydratase family. FabZ subfamily.

The protein localises to the cytoplasm. The enzyme catalyses a (3R)-hydroxyacyl-[ACP] = a (2E)-enoyl-[ACP] + H2O. In terms of biological role, involved in unsaturated fatty acids biosynthesis. Catalyzes the dehydration of short chain beta-hydroxyacyl-ACPs and long chain saturated and unsaturated beta-hydroxyacyl-ACPs. In Marinomonas sp. (strain MWYL1), this protein is 3-hydroxyacyl-[acyl-carrier-protein] dehydratase FabZ.